The chain runs to 460 residues: Phosphomethylpyrimidine synthase (460 aa).

Substrate is bound by residues asparagine 80, methionine 109, tyrosine 138, histidine 174, 194–196 (SRG), 235–238 (DSLR), and glutamate 274. Histidine 278 provides a ligand contact to Zn(2+). Tyrosine 301 lines the substrate pocket. Histidine 342 is a binding site for Zn(2+). [4Fe-4S] cluster-binding residues include cysteine 422, cysteine 425, and cysteine 430.

It belongs to the ThiC family. In terms of assembly, homodimer. It depends on [4Fe-4S] cluster as a cofactor.

It carries out the reaction 5-amino-1-(5-phospho-beta-D-ribosyl)imidazole + S-adenosyl-L-methionine = 4-amino-2-methyl-5-(phosphooxymethyl)pyrimidine + CO + 5'-deoxyadenosine + formate + L-methionine + 3 H(+). It participates in cofactor biosynthesis; thiamine diphosphate biosynthesis. In terms of biological role, catalyzes the synthesis of the hydroxymethylpyrimidine phosphate (HMP-P) moiety of thiamine from aminoimidazole ribotide (AIR) in a radical S-adenosyl-L-methionine (SAM)-dependent reaction. The polypeptide is Phosphomethylpyrimidine synthase (Sulfurimonas denitrificans (strain ATCC 33889 / DSM 1251) (Thiomicrospira denitrificans (strain ATCC 33889 / DSM 1251))).